Here is a 247-residue protein sequence, read N- to C-terminus: tRNA pseudouridine synthase A (247 aa).

The active-site Nucleophile is the Asp52. Residue Tyr111 participates in substrate binding.

This sequence belongs to the tRNA pseudouridine synthase TruA family. In terms of assembly, homodimer.

It carries out the reaction uridine(38/39/40) in tRNA = pseudouridine(38/39/40) in tRNA. In terms of biological role, formation of pseudouridine at positions 38, 39 and 40 in the anticodon stem and loop of transfer RNAs. The protein is tRNA pseudouridine synthase A of Caulobacter vibrioides (strain ATCC 19089 / CIP 103742 / CB 15) (Caulobacter crescentus).